Reading from the N-terminus, the 159-residue chain is NADH-quinone oxidoreductase subunit B (159 aa).

[4Fe-4S] cluster-binding residues include Cys-32, Cys-33, Cys-97, and Cys-126.

This sequence belongs to the complex I 20 kDa subunit family. As to quaternary structure, NDH-1 is composed of 14 different subunits. Subunits NuoB, C, D, E, F, and G constitute the peripheral sector of the complex. [4Fe-4S] cluster is required as a cofactor.

The protein resides in the cell inner membrane. It catalyses the reaction a quinone + NADH + 5 H(+)(in) = a quinol + NAD(+) + 4 H(+)(out). In terms of biological role, NDH-1 shuttles electrons from NADH, via FMN and iron-sulfur (Fe-S) centers, to quinones in the respiratory chain. The immediate electron acceptor for the enzyme in this species is believed to be ubiquinone. Couples the redox reaction to proton translocation (for every two electrons transferred, four hydrogen ions are translocated across the cytoplasmic membrane), and thus conserves the redox energy in a proton gradient. The protein is NADH-quinone oxidoreductase subunit B of Helicobacter pylori (strain J99 / ATCC 700824) (Campylobacter pylori J99).